Consider the following 55-residue polypeptide: uncharacterized protein (55 aa).

Residues Leu24 to Ile46 traverse the membrane as a helical segment.

Its subcellular location is the membrane. This is an uncharacterized protein from Dictyostelium discoideum (Social amoeba).